We begin with the raw amino-acid sequence, 170 residues long: Ureidoglycolate lyase (170 aa).

Belongs to the ureidoglycolate lyase family. Homodimer. Ni(2+) is required as a cofactor.

The enzyme catalyses (S)-ureidoglycolate = urea + glyoxylate. Its pathway is nitrogen metabolism; (S)-allantoin degradation. In terms of biological role, catalyzes the catabolism of the allantoin degradation intermediate (S)-ureidoglycolate, generating urea and glyoxylate. Involved in the utilization of allantoin as nitrogen source. The protein is Ureidoglycolate lyase of Stutzerimonas stutzeri (strain A1501) (Pseudomonas stutzeri).